The chain runs to 220 residues: Glutathione S-transferase (220 aa).

Positions M1–A77 constitute a GST N-terminal domain. Glutathione contacts are provided by residues Y12, V49, and E61–T62. One can recognise a GST C-terminal domain in the interval D82 to F211.

Belongs to the GST superfamily. Monomer and homodimer.

The protein localises to the cytoplasm. The enzyme catalyses RX + glutathione = an S-substituted glutathione + a halide anion + H(+). In terms of biological role, conjugation of reduced glutathione to a wide number of exogenous and endogenous hydrophobic electrophiles. The chain is Glutathione S-transferase from Pseudomonas putida (strain ATCC 700007 / DSM 6899 / JCM 31910 / BCRC 17059 / LMG 24140 / F1).